Reading from the N-terminus, the 577-residue chain is MNKEALVNRLNASAKRQKADIVIKNGKIMDVYNQEWIYEDIAITDGVIVGLGEYEGENIIDAEGQMIVPGFIDGHVHIESSMVTPIEFAKAVLPHGVTTVVTDPHEIANVSGEKGIEFMLEQARHTPLNIHFMLPSSVPAASFERSGAILKAADLKPFYEEEEVLGLAEVMDYVSVQQAEKDMVQKLLDARVAGKRIDGHLAGLSTDLINIYRTAFVLNDHEVTSKEEALDRIRRGMYVMMREGSVAKNTLNVLPAVNEKNARRFFFCTDDKHVDDLLSEGSVNHQVKMAIQAGLNPFLAYQLGSLNAAECYGLDTKGAIAPGFDADLLFVSDLENVTVTMTMVKGQTVAEDSKAVYQDHASTAAPDQALLDSVKLAAPLNKQDFHMPIDSEQQINVIQIIPNQLETRLVQVPAPVAREFEPDTELDLLKIAVVERHKGLKETGLGVVKGFGFKSGAIATTISHDSHNIIAVGTNDEDIAAAVNKLQEIGGGLTIIKNGEELHSVPLPIAGLLSDQSAEQVNQSLLTLHDKLSLIGFTGGFNPFLTLSFLALPVIPDIKMTTTGLFDVKSFQHISLQ.

The protein belongs to the metallo-dependent hydrolases superfamily. Adenine deaminase family. It depends on Mn(2+) as a cofactor.

The catalysed reaction is adenine + H2O + H(+) = hypoxanthine + NH4(+). This chain is Adenine deaminase (adeC), found in Bacillus subtilis (strain 168).